A 34-amino-acid chain; its full sequence is Non-cysteinic peptide Bs 10 (34 aa).

Residues 1–34 (VTMGYIKDGDGKKIAKKKNKNGRKHVEIDLNKVG) form a disordered region. A compositionally biased stretch (basic residues) spans 14 to 23 (IAKKKNKNGR). Positions 24–34 (KHVEIDLNKVG) are enriched in basic and acidic residues.

As to expression, expressed by the venom gland.

It localises to the secreted. The polypeptide is Non-cysteinic peptide Bs 10 (Hottentotta tamulus sindicus (Scorpion)).